A 101-amino-acid polypeptide reads, in one-letter code: Small ribosomal subunit protein uS10 (101 aa).

This sequence belongs to the universal ribosomal protein uS10 family. As to quaternary structure, part of the 30S ribosomal subunit.

In terms of biological role, involved in the binding of tRNA to the ribosomes. The chain is Small ribosomal subunit protein uS10 from Corynebacterium aurimucosum (strain ATCC 700975 / DSM 44827 / CIP 107346 / CN-1) (Corynebacterium nigricans).